The primary structure comprises 275 residues: Polyamine aminopropyltransferase (275 aa).

A PABS domain is found at 2 to 235; sequence ELWFTEKQTK…GLWTFTIGSK (234 aa). Gln31 contacts S-methyl-5'-thioadenosine. The spermidine site is built by His62 and Asp86. S-methyl-5'-thioadenosine contacts are provided by residues Glu106 and 137-138; that span reads DG. Asp155 acts as the Proton acceptor in catalysis. A spermidine-binding site is contributed by 155-158; sequence DSTE. Pro162 contributes to the S-methyl-5'-thioadenosine binding site.

This sequence belongs to the spermidine/spermine synthase family. Homodimer or homotetramer.

Its subcellular location is the cytoplasm. It carries out the reaction S-adenosyl 3-(methylsulfanyl)propylamine + putrescine = S-methyl-5'-thioadenosine + spermidine + H(+). It participates in amine and polyamine biosynthesis; spermidine biosynthesis; spermidine from putrescine: step 1/1. In terms of biological role, catalyzes the irreversible transfer of a propylamine group from the amino donor S-adenosylmethioninamine (decarboxy-AdoMet) to putrescine (1,4-diaminobutane) to yield spermidine. The protein is Polyamine aminopropyltransferase of Bacillus cereus (strain ATCC 10987 / NRS 248).